Reading from the N-terminus, the 320-residue chain is Methionine import ATP-binding protein MetN (320 aa).

The region spanning 2-237 (IEIKNVSKYF…PSSEMKKLIG (236 aa)) is the ABC transporter domain. 34–41 (GHSGAGKS) serves as a coordination point for ATP.

The protein belongs to the ABC transporter superfamily. Methionine importer (TC 3.A.1.24) family. As to quaternary structure, the complex is composed of two ATP-binding proteins (MetN), two transmembrane proteins (MetI) and a solute-binding protein (MetQ).

It localises to the cell membrane. The enzyme catalyses L-methionine(out) + ATP + H2O = L-methionine(in) + ADP + phosphate + H(+). It carries out the reaction D-methionine(out) + ATP + H2O = D-methionine(in) + ADP + phosphate + H(+). Its function is as follows. Part of the ABC transporter complex MetNIQ involved in methionine import. Responsible for energy coupling to the transport system. The protein is Methionine import ATP-binding protein MetN of Clostridium acetobutylicum (strain ATCC 824 / DSM 792 / JCM 1419 / IAM 19013 / LMG 5710 / NBRC 13948 / NRRL B-527 / VKM B-1787 / 2291 / W).